Reading from the N-terminus, the 229-residue chain is Ribose-5-phosphate isomerase A (229 aa).

Substrate-binding positions include 28-31 (TGST), 84-87 (DGAD), and 97-100 (KGGG). Residue glutamate 106 is the Proton acceptor of the active site. Lysine 124 contributes to the substrate binding site.

This sequence belongs to the ribose 5-phosphate isomerase family. As to quaternary structure, homodimer.

It catalyses the reaction aldehydo-D-ribose 5-phosphate = D-ribulose 5-phosphate. Its pathway is carbohydrate degradation; pentose phosphate pathway; D-ribose 5-phosphate from D-ribulose 5-phosphate (non-oxidative stage): step 1/1. Catalyzes the reversible conversion of ribose-5-phosphate to ribulose 5-phosphate. The polypeptide is Ribose-5-phosphate isomerase A (Lacticaseibacillus paracasei (strain ATCC 334 / BCRC 17002 / CCUG 31169 / CIP 107868 / KCTC 3260 / NRRL B-441) (Lactobacillus paracasei)).